The chain runs to 347 residues: DNA-directed RNA polymerase subunit alpha (347 aa).

The tract at residues 1 to 226 (MLISQRPTLS…ELFGLARELN (226 aa)) is alpha N-terminal domain (alpha-NTD). The alpha C-terminal domain (alpha-CTD) stretch occupies residues 243–347 (HIASFALPID…SQDYAETEQL (105 aa)). Residues 326–347 (TTGTWSTDGAYDSQDYAETEQL) form a disordered region.

The protein belongs to the RNA polymerase alpha chain family. As to quaternary structure, homodimer. The RNAP catalytic core consists of 2 alpha, 1 beta, 1 beta' and 1 omega subunit. When a sigma factor is associated with the core the holoenzyme is formed, which can initiate transcription.

It carries out the reaction RNA(n) + a ribonucleoside 5'-triphosphate = RNA(n+1) + diphosphate. Its function is as follows. DNA-dependent RNA polymerase catalyzes the transcription of DNA into RNA using the four ribonucleoside triphosphates as substrates. This chain is DNA-directed RNA polymerase subunit alpha, found in Mycobacterium leprae (strain TN).